A 525-amino-acid polypeptide reads, in one-letter code: Ubiquitin carboxyl-terminal hydrolase 22 (525 aa).

The UBP-type zinc-finger motif lies at 21-138 (PGCSHLGSFK…KEEQRKAWKM (118 aa)). Zn(2+) is bound by residues C23, H25, C63, C66, C76, C79, C84, H89, H93, H99, C112, and C115. K129 bears the N6-acetyllysine mark. T147 is subject to Phosphothreonine; by CDK1. The region spanning 176–520 (RGLINLGNTC…EGYLLFYHKQ (345 aa)) is the USP domain. C185 acts as the Nucleophile in catalysis. S237 carries the phosphoserine; by CDK1 modification. The active-site Proton acceptor is H479.

It belongs to the peptidase C19 family. UBP8 subfamily. As to quaternary structure, component of some SAGA transcription coactivator-HAT complexes, at least composed of ATXN7, ATXN7L3, ENY2, GCN5L2, SUPT3H, TAF10, TRRAP and USP22. Within the SAGA complex, ATXN7L3, ENY2 and USP22 form a subcomplex required for histone deubiquitination. Interacts directly with ATXN7L3; leading to its recruitment to the SAGA complex. Interacts with ATXN7L3 and weakly with ATXN7L3B. Interacts with MED1. In terms of processing, phosphorylated in G2/M phase, but not in G1 phase by CDK1. Post-translationally, ubiquitinated and subsequently degraded in a CDC20-dependent manner. Moderately expressed in various tissues including heart and skeletal muscle, and weakly expressed in lung and liver.

The protein localises to the nucleus. It localises to the cytoplasm. It carries out the reaction Thiol-dependent hydrolysis of ester, thioester, amide, peptide and isopeptide bonds formed by the C-terminal Gly of ubiquitin (a 76-residue protein attached to proteins as an intracellular targeting signal).. In terms of biological role, deubiquitinase that plays a role in several cellular processes including transcriptional regulation, cell cycle progression or innate immunity. As part of the transcription regulatory histone acetylation (HAT) complex SAGA, catalyzes the deubiquitination of both histones H2A and H2B, thereby acting as a transcriptional coactivator. Recruited to specific gene promoters by activators such as MYC, where it is required for transcription. Facilitates cell-cycle progression by stabilizing CCNB1 and antagonizing its proteasome-mediated degradation in a cell cycle-specific manner. Modulates cell cycle progression and apoptosis also by antagonizing TP53 transcriptional activation through deacetylase SIRT1 stabilization. Plays multiple roles in immunity and inflammation. Participates in antiviral response by deubiquitinating the importin KPNA2, leading to IRF3 nuclear translocation and subsequent type I interferon production. Acts as a central regulator of type III IFN signaling by negatively regulating STING1 activation and ubiquitination. Inhibits NLRP3 inflammasome activation by promoting NLRP3 degradation through ATG5-dependent autophagy. Deubiquitinates CD274 to induce its stabilization and thereby participates in maintenance of immune tolerance to self. Controls necroptotic cell death by regulating RIPK3 phosphorylation and ubiquitination. During bacterial infection, promotes pro-inflammatory response by targeting TRAF6 and removing its 'Lys-48'-linked polyubiquitination. The sequence is that of Ubiquitin carboxyl-terminal hydrolase 22 (USP22) from Homo sapiens (Human).